Here is a 708-residue protein sequence, read N- to C-terminus: Polyribonucleotide nucleotidyltransferase (708 aa).

Residues Asp488 and Asp494 each coordinate Mg(2+). The KH domain maps to 555–614; the sequence is PRIYTMKIPQKKIAEVIGKGGATIRQLTEETGTTIEIGDDGTIKIAATDGESAANAISRI. The S1 motif domain maps to 624-692; sequence GTIYEGKVVR…RQGRVRLSIK (69 aa).

The protein belongs to the polyribonucleotide nucleotidyltransferase family. Component of the RNA degradosome, which is a multiprotein complex involved in RNA processing and mRNA degradation. Mg(2+) is required as a cofactor.

The protein localises to the cytoplasm. It carries out the reaction RNA(n+1) + phosphate = RNA(n) + a ribonucleoside 5'-diphosphate. Involved in mRNA degradation. Catalyzes the phosphorolysis of single-stranded polyribonucleotides processively in the 3'- to 5'-direction. This chain is Polyribonucleotide nucleotidyltransferase, found in Pseudoalteromonas translucida (strain TAC 125).